A 783-amino-acid polypeptide reads, in one-letter code: Isoamylase 1, chloroplastic (783 aa).

A chloroplast-targeting transit peptide spans 1-43; sequence MDAIKCSSSFLHHTKLNTLFSNHTFPKISAPNFKPLFRPISIS. Asp-410 (nucleophile) is an active-site residue. Glu-466 serves as the catalytic Proton donor.

Belongs to the glycosyl hydrolase 13 family. As to quaternary structure, associates with ISA2 to form the heteromultimeric complex Iso1 required for amylopectin synthesis.

Its subcellular location is the plastid. It is found in the chloroplast. It catalyses the reaction Hydrolysis of (1-&gt;6)-alpha-D-glucosidic branch linkages in glycogen, amylopectin and their beta-limit dextrins.. Its pathway is glycan biosynthesis; starch biosynthesis. Involved in the trimming of pre-amylopectin chains. Accelerates the crystallization of nascent amylopectin molecules during starch synthesis. ISA1 and ISA2 work exclusively together as a multimeric holoenzyme. ISA1-ISA2 removes preferentially branches that are very close to other branches. Promotes negative gravitropic responses in shoots by facilitating starch granules (statoliths) formation in hypocotyls. The chain is Isoamylase 1, chloroplastic from Arabidopsis thaliana (Mouse-ear cress).